A 551-amino-acid chain; its full sequence is Chaperonin GroEL (551 aa).

ATP is bound by residues 30–33 (TLGP), lysine 51, 87–91 (DGTTT), glycine 415, 479–481 (NAA), and aspartate 495. A disordered region spans residues 523–551 (DSPKEDKSSDMPSPSAGGMGGMGGMGGMM). Residues 539–551 (GGMGGMGGMGGMM) show a composition bias toward gly residues.

It belongs to the chaperonin (HSP60) family. As to quaternary structure, forms a cylinder of 14 subunits composed of two heptameric rings stacked back-to-back. Interacts with the co-chaperonin GroES.

It localises to the cytoplasm. The enzyme catalyses ATP + H2O + a folded polypeptide = ADP + phosphate + an unfolded polypeptide.. Together with its co-chaperonin GroES, plays an essential role in assisting protein folding. The GroEL-GroES system forms a nano-cage that allows encapsulation of the non-native substrate proteins and provides a physical environment optimized to promote and accelerate protein folding. This is Chaperonin GroEL from Buchnera aphidicola subsp. Chaetophorus leucomelas.